The sequence spans 130 residues: Organic solute transporter subunit beta (130 aa).

Residues Met1–Pro35 lie on the Extracellular side of the membrane. A helical membrane pass occupies residues Trp36–Gly56. Residues Arg57–Ser130 lie on the Cytoplasmic side of the membrane. The disordered stretch occupies residues Leu99–Ser130. The span at Met110–Asp124 shows a compositional bias: basic and acidic residues.

The protein belongs to the OST-beta family. As to quaternary structure, interacts with SLC51A. The Ost-alpha/Ost-beta complex is a heterodimer composed of alpha (SLC51A) and beta (SLC51B) subunit; induces the transport of SLC51A from the endoplasmic reticulum to the plasma membrane.

It is found in the cell membrane. The catalysed reaction is taurocholate(out) = taurocholate(in). It catalyses the reaction estrone 3-sulfate(out) = estrone 3-sulfate(in). It carries out the reaction dehydroepiandrosterone 3-sulfate(out) = dehydroepiandrosterone 3-sulfate(in). The enzyme catalyses tauroursodeoxycholate(out) = tauroursodeoxycholate(in). The catalysed reaction is glycoursodeoxycholate(out) = glycoursodeoxycholate(in). It catalyses the reaction glycocholate(out) = glycocholate(in). It carries out the reaction taurochenodeoxycholate(out) = taurochenodeoxycholate(in). The enzyme catalyses glycochenodeoxycholate(out) = glycochenodeoxycholate(in). The catalysed reaction is taurodeoxycholate(out) = taurodeoxycholate(in). It catalyses the reaction glycodeoxycholate(out) = glycodeoxycholate(in). It carries out the reaction prostaglandin E2(out) = prostaglandin E2(in). Its function is as follows. Essential component of the Ost-alpha/Ost-beta complex, a heterodimer that acts as the intestinal basolateral transporter responsible for bile acid export from enterocytes into portal blood. The Ost-alpha/Ost-beta complex efficiently transports the major species of bile acids (taurocholate). Taurine conjugates are transported more efficiently across the basolateral membrane than glycine-conjugated bile acids. Can also transport steroids such as estrone 3-sulfate and dehydroepiandrosterone 3-sulfate, therefore playing a role in the enterohepatic circulation of sterols. Able to transport eicosanoids such as prostaglandin E2. Modulates SLC51A glycosylation, membrane trafficking and stability activities. This is Organic solute transporter subunit beta (SLC51B) from Bos taurus (Bovine).